The chain runs to 98 residues: Cystatin-A (98 aa).

Met-1 carries the N-acetylmethionine modification. A Secondary area of contact motif is present at residues 46-50 (QVVAG).

The protein belongs to the cystatin family. In terms of tissue distribution, expressed in the skin throughout the epidermis.

It is found in the cytoplasm. Functionally, this is an intracellular thiol proteinase inhibitor. Has an important role in desmosome-mediated cell-cell adhesion in the lower levels of the epidermis. The sequence is that of Cystatin-A (CSTA) from Homo sapiens (Human).